Here is a 69-residue protein sequence, read N- to C-terminus: Neurotoxin Cex3 (69 aa).

Residue Ala1 is a signal peptide. The LCN-type CS-alpha/beta domain maps to 2-67 (KDGYLVNKST…TYPLPNKSCG (66 aa)). Cystine bridges form between Cys13–Cys66, Cys17–Cys42, Cys26–Cys47, and Cys30–Cys49. Cys66 carries the cysteine amide modification. A propeptide spanning residues 67–69 (GRK) is cleaved from the precursor.

The protein belongs to the long (4 C-C) scorpion toxin superfamily. Sodium channel inhibitor family. Beta subfamily. Expressed by the venom gland.

It localises to the secreted. In terms of biological role, beta toxins bind voltage-independently at site-4 of sodium channels (Nav) and shift the voltage of activation toward more negative potentials thereby affecting sodium channel activation and promoting spontaneous and repetitive firing. This chain is Neurotoxin Cex3, found in Centruroides exilicauda (Bark scorpion).